We begin with the raw amino-acid sequence, 67 residues long: Small ribosomal subunit protein bS21 (67 aa).

Belongs to the bacterial ribosomal protein bS21 family.

The polypeptide is Small ribosomal subunit protein bS21 (Nitratidesulfovibrio vulgaris (strain DP4) (Desulfovibrio vulgaris)).